A 242-amino-acid polypeptide reads, in one-letter code: UPF0273 protein MJ1359 (242 aa).

The KaiC domain maps to 2 to 242; that stretch reads KRVKTGIPGM…VYPDKVLKLR (241 aa). Residue 29–36 coordinates ATP; that stretch reads GGPGTGKS.

Belongs to the UPF0273 family.

The sequence is that of UPF0273 protein MJ1359 from Methanocaldococcus jannaschii (strain ATCC 43067 / DSM 2661 / JAL-1 / JCM 10045 / NBRC 100440) (Methanococcus jannaschii).